We begin with the raw amino-acid sequence, 232 residues long: MSACQTPVIVALDFPTREAALRLADQLDPKLCRVKVGKELFTSCAADIVETLRHRGFEVFLDLKFHDIPNTTAMAVKAAAEMGVWMVNVHCSGGLRMMAACREVLEQRTGPQPLLIGVTVLTSMEREDLAGIGLDIDPQVQVLRLAALAGKAGMDGLVCSALEAQALKAAHPSLQLVTPGIRPAGSAQDDQRRILTPRQALDAGSDYLVIGRPISQAADPAKALAAVVAELA.

Substrate is bound by residues D13, K35, 62 to 71 (DLKFHDIPNT), T122, R182, Q191, G211, and R212. K64 (proton donor) is an active-site residue.

The protein belongs to the OMP decarboxylase family. Type 1 subfamily. In terms of assembly, homodimer.

The enzyme catalyses orotidine 5'-phosphate + H(+) = UMP + CO2. The protein operates within pyrimidine metabolism; UMP biosynthesis via de novo pathway; UMP from orotate: step 2/2. Functionally, catalyzes the decarboxylation of orotidine 5'-monophosphate (OMP) to uridine 5'-monophosphate (UMP). This chain is Orotidine 5'-phosphate decarboxylase, found in Pseudomonas syringae pv. syringae (strain B728a).